Reading from the N-terminus, the 126-residue chain is NADH-quinone oxidoreductase subunit A (126 aa).

The next 3 helical transmembrane spans lie at 14 to 34 (FLYF…TSWF), 66 to 86 (FYLI…LYAW), and 96 to 116 (IGFV…FYLV).

This sequence belongs to the complex I subunit 3 family. As to quaternary structure, NDH-1 is composed of 13 different subunits. Subunits NuoA, H, J, K, L, M, N constitute the membrane sector of the complex.

It is found in the cell membrane. It carries out the reaction a quinone + NADH + 5 H(+)(in) = a quinol + NAD(+) + 4 H(+)(out). In terms of biological role, NDH-1 shuttles electrons from NADH, via FMN and iron-sulfur (Fe-S) centers, to quinones in the respiratory chain. The immediate electron acceptor for the enzyme in this species is believed to be ubiquinone. Couples the redox reaction to proton translocation (for every two electrons transferred, four hydrogen ions are translocated across the cytoplasmic membrane), and thus conserves the redox energy in a proton gradient. In Buchnera aphidicola subsp. Schizaphis graminum (strain Sg), this protein is NADH-quinone oxidoreductase subunit A.